We begin with the raw amino-acid sequence, 347 residues long: Putative coenzyme F420-dependent oxidoreductase Rv3520c (347 aa).

In Mycobacterium tuberculosis (strain ATCC 25618 / H37Rv), this protein is Putative coenzyme F420-dependent oxidoreductase Rv3520c.